We begin with the raw amino-acid sequence, 166 residues long: Keratin, type II cytoskeletal 68 kDa, component IB (166 aa).

An IF rod domain is found at 1–41 (EAKDDLARLLRDYQDAMNVKLALDVEIATYRKLLEGEECRM). The tract at residues 1–41 (EAKDDLARLLRDYQDAMNVKLALDVEIATYRKLLEGEECRM) is coil 2B. The tail stretch occupies residues 42 to 166 (SGECPSAVSI…FSQSSQRTSR (125 aa)). Residues 122-146 (GFGGGSSGFGSGSGGRSGVSGGGLS) show a composition bias toward gly residues. The disordered stretch occupies residues 122 to 166 (GFGGGSSGFGSGSGGRSGVSGGGLSSGSSRGGSVRFSQSSQRTSR). A compositionally biased stretch (low complexity) spans 147-166 (SGSSRGGSVRFSQSSQRTSR).

This sequence belongs to the intermediate filament family. As to quaternary structure, heterotetramer of two type I and two type II keratins.

The chain is Keratin, type II cytoskeletal 68 kDa, component IB from Bos taurus (Bovine).